Reading from the N-terminus, the 142-residue chain is HTH-type transcriptional regulator LysM (142 aa).

An HTH asnC-type domain is found at 6-69 (IDESDLKILE…ELENEIRAIV (64 aa)). The H-T-H motif DNA-binding region spans 25–44 (YTLIAKELKVSEAAIRKRIE).

Homotetramer.

It is found in the cytoplasm. It functions in the pathway amino-acid biosynthesis; L-lysine biosynthesis via AAA pathway [regulation]. In the absence or at low concentrations of lysine, activates the biosynthesis of this amino acid via the alpha-aminoadipate (AAA) pathway. In Saccharolobus solfataricus (strain ATCC 35092 / DSM 1617 / JCM 11322 / P2) (Sulfolobus solfataricus), this protein is HTH-type transcriptional regulator LysM (lysM).